The following is a 639-amino-acid chain: Threonine--tRNA ligase (639 aa).

The 61-residue stretch at 1 to 61 (MIHITLPDGS…TQDSPLSIVT (61 aa)) folds into the TGS domain. The interval 242-533 (DHRKLGRELD…LIEEHAGALP (292 aa)) is catalytic. Zn(2+)-binding residues include Cys-333, His-384, and His-510.

The protein belongs to the class-II aminoacyl-tRNA synthetase family. As to quaternary structure, homodimer. Zn(2+) serves as cofactor.

Its subcellular location is the cytoplasm. The catalysed reaction is tRNA(Thr) + L-threonine + ATP = L-threonyl-tRNA(Thr) + AMP + diphosphate + H(+). Its function is as follows. Catalyzes the attachment of threonine to tRNA(Thr) in a two-step reaction: L-threonine is first activated by ATP to form Thr-AMP and then transferred to the acceptor end of tRNA(Thr). Also edits incorrectly charged L-seryl-tRNA(Thr). This Acidovorax sp. (strain JS42) protein is Threonine--tRNA ligase.